The primary structure comprises 213 residues: StAR-related lipid transfer protein 5 (213 aa).

In terms of domain architecture, START spans 1–213 (MDPSWATQES…LQKAVRKFHH (213 aa)).

As to expression, expressed in most tissues, with highest levels in liver and in kidney.

In terms of biological role, may be involved in the intracellular transport of sterols or other lipids. May bind cholesterol or other sterols. This chain is StAR-related lipid transfer protein 5 (Stard5), found in Mus musculus (Mouse).